The primary structure comprises 298 residues: 4-nitrophenylphosphatase (298 aa).

Homodimer. In terms of processing, the N-terminus is blocked.

The enzyme catalyses 4-nitrophenyl phosphate + H2O = 4-nitrophenol + phosphate + H(+). With respect to regulation, activity enhanced by Mg(2+) ion but inhibited by Zn(2+) ion. In Schizosaccharomyces pombe (strain 972 / ATCC 24843) (Fission yeast), this protein is 4-nitrophenylphosphatase (pho2).